The sequence spans 196 residues: Large ribosomal subunit protein uL18 (196 aa).

Belongs to the universal ribosomal protein uL18 family. As to quaternary structure, part of the 50S ribosomal subunit. Contacts the 5S and 23S rRNAs.

This is one of the proteins that bind and probably mediate the attachment of the 5S RNA into the large ribosomal subunit, where it forms part of the central protuberance. The chain is Large ribosomal subunit protein uL18 from Desulfurococcus amylolyticus (strain DSM 18924 / JCM 16383 / VKM B-2413 / 1221n) (Desulfurococcus kamchatkensis).